We begin with the raw amino-acid sequence, 419 residues long: UDP-N-acetylglucosamine 1-carboxyvinyltransferase (419 aa).

A phosphoenolpyruvate-binding site is contributed by 22–23; it reads KN. Arginine 91 serves as a coordination point for UDP-N-acetyl-alpha-D-glucosamine. Cysteine 115 serves as the catalytic Proton donor. Cysteine 115 carries the 2-(S-cysteinyl)pyruvic acid O-phosphothioketal modification. UDP-N-acetyl-alpha-D-glucosamine-binding positions include 120–124, 160–163, aspartate 305, and isoleucine 327; these read RPVDL and KVSV.

Belongs to the EPSP synthase family. MurA subfamily.

The protein resides in the cytoplasm. The catalysed reaction is phosphoenolpyruvate + UDP-N-acetyl-alpha-D-glucosamine = UDP-N-acetyl-3-O-(1-carboxyvinyl)-alpha-D-glucosamine + phosphate. It participates in cell wall biogenesis; peptidoglycan biosynthesis. Cell wall formation. Adds enolpyruvyl to UDP-N-acetylglucosamine. This Tolumonas auensis (strain DSM 9187 / NBRC 110442 / TA 4) protein is UDP-N-acetylglucosamine 1-carboxyvinyltransferase.